Reading from the N-terminus, the 446-residue chain is MMMPDDHHPLSFPSYVLHQEHIAPNPNPNPNPTSSNSAKRKRNLPGNPDPDAEVIALSPNSLMTTNRFICEVCNKGFKRDQNLQLHRRGHNLPWKLKQRTNKEQVKKKVYICPEKTCVHHDPARALGDLTGIKKHFSRKHGEKKWKCDKCSKKYAVMSDWKAHSKICGTKEYRCDCGTLFSRKDSFITHRAFCDALAEESARFVSVPPAPAYLNNALDVEVNHGNINQNHQQRQLNTTSSQLDQPGFNTNRNNIAFLGQTLPTNVFASSSSPSPRSASDSLQNLWHLQGQSSHQWLLNENNNNNNNILQRGISKNQEEHEMKNVISNGSLFSSEARNNTNNYNQNGGQIASMSATALLQKAAQMGSKRSSSSSSNSKTFGLMTSIFNNKQAENIKTKEVDERGFTRDFLGVGSQHRSWPLLMVNHNLPDSSPPASTDGTPTADMNQ.

A disordered region spans residues 20–53 (EHIAPNPNPNPNPTSSNSAKRKRNLPGNPDPDAE). S58 bears the Phosphoserine mark. C2H2-type zinc fingers lie at residues 68–90 (FICE…RRGH) and 110–140 (YICP…SRKH). A Nuclear localization signal motif is present at residues 132–139 (IKKHFSRK). Residues 145-168 (WKCDKCSKKYAVMSDWKAHSKICG) form a C2H2-type 2; degenerate zinc finger. Residues C147, C150, H163, C167, C174, C176, H189, and C193 each contribute to the Zn(2+) site. Residues 172-195 (YRCDCGTLFSRKDSFITHRAFCDA) form a CCHC-type 2; atypical zinc finger. The SHR-binding stretch occupies residues 182 to 194 (RKDSFITHRAFCD). A disordered region spans residues 425-446 (HNLPDSSPPASTDGTPTADMNQ). Residues 427–446 (LPDSSPPASTDGTPTADMNQ) show a composition bias toward polar residues.

In terms of assembly, binds to RGA and SCL3 competitively in the nucleus. In terms of tissue distribution, expressed in roots, especially in vascular initials, cortex, endodermis, and quiescent center (QC).

Its subcellular location is the nucleus. Transcription factor that, together with JKD, regulates tissue boundaries and asymmetric cell division in roots by a rapid up-regulation of 'SCARECROW' (SCR), thus controlling the nuclear localization of 'SHORT-ROOT' (SHR) and restricting its action. Confines CYCD6 expression to the cortex-endodermis initial/daughter (CEI/CEID) tissues. Binds DNA via its zinc fingers. Recognizes and binds to SCL3 promoter sequence 5'-AGACAA-3' to promote its expression when in complex with RGA. This Arabidopsis thaliana (Mouse-ear cress) protein is Zinc finger protein BALDIBIS.